A 159-amino-acid chain; its full sequence is Phosphopantetheine adenylyltransferase (159 aa).

S9 is a binding site for substrate. ATP-binding positions include 9-10 (SF) and H17. Substrate contacts are provided by K41, L73, and R87. Residues 88-90 (GLR), E98, and 123-129 (YSYVSSS) contribute to the ATP site.

It belongs to the bacterial CoaD family. As to quaternary structure, homohexamer. The cofactor is Mg(2+).

It is found in the cytoplasm. It carries out the reaction (R)-4'-phosphopantetheine + ATP + H(+) = 3'-dephospho-CoA + diphosphate. Its pathway is cofactor biosynthesis; coenzyme A biosynthesis; CoA from (R)-pantothenate: step 4/5. In terms of biological role, reversibly transfers an adenylyl group from ATP to 4'-phosphopantetheine, yielding dephospho-CoA (dPCoA) and pyrophosphate. The protein is Phosphopantetheine adenylyltransferase of Shouchella clausii (strain KSM-K16) (Alkalihalobacillus clausii).